The chain runs to 313 residues: MTLQQIKEIYLRPLTELILKALEIHNKNFGNDIELCSLKSIKTGTCPEDCKYCPQSGHYNTSIEKHKLLDKDSILAEAKNAKDAGSKRFCMGAAWKHIPKKDFDQVAEIITEVKNLGLETCVTLGSINADEATKLKQAGLDYYNHNLDTSREFYPEIITTRKFEERIETIRNVANANINVCCGGILGMGESLDDRFNLLLELLQLPAAPKSIPINTLIPVKGTPLGDKYTNAQIDSFELVRFIATTRILFPQARLRLSAGRENMSLETQTLCFLAGINSIFYGNKLLTENNATVNSDNFLLAKLGLKSNAELC.

The Radical SAM core domain occupies 28-258 (NFGNDIELCS…LFPQARLRLS (231 aa)). Residues Cys46, Cys50, and Cys53 each coordinate [4Fe-4S] cluster. 4 residues coordinate [2Fe-2S] cluster: Cys90, Cys121, Cys181, and Arg256.

It belongs to the radical SAM superfamily. Biotin synthase family. In terms of assembly, homodimer. The cofactor is [4Fe-4S] cluster. [2Fe-2S] cluster serves as cofactor.

The enzyme catalyses (4R,5S)-dethiobiotin + (sulfur carrier)-SH + 2 reduced [2Fe-2S]-[ferredoxin] + 2 S-adenosyl-L-methionine = (sulfur carrier)-H + biotin + 2 5'-deoxyadenosine + 2 L-methionine + 2 oxidized [2Fe-2S]-[ferredoxin]. It participates in cofactor biosynthesis; biotin biosynthesis; biotin from 7,8-diaminononanoate: step 2/2. Functionally, catalyzes the conversion of dethiobiotin (DTB) to biotin by the insertion of a sulfur atom into dethiobiotin via a radical-based mechanism. The chain is Biotin synthase from Francisella tularensis subsp. holarctica (strain FTNF002-00 / FTA).